A 130-amino-acid chain; its full sequence is MAQIRYYATGRRKTSVAKVWLSPGNGKIIVNDKNMEEYFPLETLRIIVKQPLTLTETLNKYDVIAKVKGGGLSGQAGALRHGIARALVLADPTLRPVLKKAGFLTRDPRMVERKKYGLKKARRAPQFSKR.

The protein belongs to the universal ribosomal protein uS9 family.

This is Small ribosomal subunit protein uS9 from Caldicellulosiruptor saccharolyticus (strain ATCC 43494 / DSM 8903 / Tp8T 6331).